Reading from the N-terminus, the 282-residue chain is GAKNGVHPPLGWIPIQDARIRQHGYNVISAAFPVILPDGTALWEDGMDANVKVATPAEMCQAKAAGATMVMSIGGAAAAIDLSSSSVADKFVSTIVPILKRYNFDGVDIDIEAGLSGSGTFGTLSASQANLVRIIDGILAQMPSNFGLTMAPETAYVTGGSVTYGSIWGAYLPIIKKYADNGRLWWLNMQYYNGAMYGCSGDSYEAGTVKGFVAQTDCLDKGLVIQGTTIRVPYDKQVPGLPAQSGAGGGYMSPSLVGQAWDHYNGSLKGLMTWSINWDGSK.

Residues 1 to 282 enclose the GH18 domain; the sequence is GAKNGVHPPL…TWSINWDGSK (282 aa). Residue E112 is the Proton donor of the active site. N265 is a glycosylation site (N-linked (GlcNAc...) asparagine).

Belongs to the glycosyl hydrolase 18 family. Chitinase class V subfamily.

The protein resides in the secreted. It catalyses the reaction Random endo-hydrolysis of N-acetyl-beta-D-glucosaminide (1-&gt;4)-beta-linkages in chitin and chitodextrins.. Secreted chitinase involved in the degradation of chitin, a component of the cell walls of fungi and exoskeletal elements of some animals (including worms and arthropods). Participates in the infection process and directly acts in the penetration process of the host cuticle. In Metarhizium anisopliae (Entomophthora anisopliae), this protein is Endochitinase 4 (chi4).